A 403-amino-acid polypeptide reads, in one-letter code: MSDPTPPRLQRVTVLGATGSIGMSTLDVLARHPDRFEAFALTAQIQVERLFELCLRFSPRFAVLVDSAAASDLRQRLKAAGSATEVLAGPGALVDVAAHPDSDAVMAAIVGAAGLAPALAAARAGKRVLLANKEALVLSGRLFMQAVVESGAELLPIDSEHNAVFQALPQGYARDPQRCGVRRVLLTASGGPFRERSIESLADVTPDEACAHPNWVMGRKISVDSATMMNKGLEVIEAHWLFAVPPEAIEVVVHPQSVIHSMVEYADGSVLAQLGNPDMRTPIAHALAYPERIDAGVRPLDLFEIGRLNFERPDFVRFPCLALAYDALREGGAAAAVLNAANEEAVAAFLERRVGFTRIPDIIAATLERARDLSVDCIEAILDADARAREVARSEILARQTTP.

Residues threonine 18, glycine 19, serine 20, isoleucine 21, glutamine 46, and asparagine 132 each coordinate NADPH. Lysine 133 provides a ligand contact to 1-deoxy-D-xylulose 5-phosphate. Glutamate 134 provides a ligand contact to NADPH. Residue aspartate 158 participates in Mn(2+) binding. 4 residues coordinate 1-deoxy-D-xylulose 5-phosphate: serine 159, glutamate 160, serine 189, and histidine 212. Glutamate 160 contributes to the Mn(2+) binding site. Residue glycine 218 coordinates NADPH. Residues serine 225, asparagine 230, lysine 231, and glutamate 234 each contribute to the 1-deoxy-D-xylulose 5-phosphate site. Glutamate 234 provides a ligand contact to Mn(2+).

This sequence belongs to the DXR family. It depends on Mg(2+) as a cofactor. Requires Mn(2+) as cofactor.

The enzyme catalyses 2-C-methyl-D-erythritol 4-phosphate + NADP(+) = 1-deoxy-D-xylulose 5-phosphate + NADPH + H(+). It functions in the pathway isoprenoid biosynthesis; isopentenyl diphosphate biosynthesis via DXP pathway; isopentenyl diphosphate from 1-deoxy-D-xylulose 5-phosphate: step 1/6. Catalyzes the NADPH-dependent rearrangement and reduction of 1-deoxy-D-xylulose-5-phosphate (DXP) to 2-C-methyl-D-erythritol 4-phosphate (MEP). The chain is 1-deoxy-D-xylulose 5-phosphate reductoisomerase from Aromatoleum aromaticum (strain DSM 19018 / LMG 30748 / EbN1) (Azoarcus sp. (strain EbN1)).